The following is a 90-amino-acid chain: Probable Fe(2+)-trafficking protein (90 aa).

The protein belongs to the Fe(2+)-trafficking protein family.

Could be a mediator in iron transactions between iron acquisition and iron-requiring processes, such as synthesis and/or repair of Fe-S clusters in biosynthetic enzymes. This Haemophilus influenzae (strain 86-028NP) protein is Probable Fe(2+)-trafficking protein.